We begin with the raw amino-acid sequence, 259 residues long: Global transcriptional regulator CodY (259 aa).

The GAF domain stretch occupies residues 1–155; it reads MNLLEKTRKI…GATVVGMEIL (155 aa). The H-T-H motif DNA-binding region spans 203 to 222; that stretch reads ASKIADRVGITRSVIVNALR. The residue at position 215 (Ser215) is a Phosphoserine.

The protein belongs to the CodY family.

The protein resides in the cytoplasm. Its function is as follows. DNA-binding global transcriptional regulator which is involved in the adaptive response to starvation and acts by directly or indirectly controlling the expression of numerous genes in response to nutrient availability. During rapid exponential growth, CodY is highly active and represses genes whose products allow adaptation to nutrient depletion. The protein is Global transcriptional regulator CodY of Lysinibacillus sphaericus (strain C3-41).